The primary structure comprises 714 residues: Fumarate reductase flavoprotein subunit (714 aa).

FAD is bound by residues 13 to 16, 42 to 44, and 49 to 50; these read GGLA, SHS, and GG. H43 is modified (tele-8alpha-FAD histidine). Catalysis depends on residues H257 and R273. Residues E420 and 436–437 each bind FAD; that span reads SV.

The protein belongs to the FAD-dependent oxidoreductase 2 family. FRD/SDH subfamily. As to quaternary structure, part of an enzyme complex containing three subunits: a flavoprotein (frdA), an iron-sulfur protein (frdB), and diheme cytochrome b (frdC). Requires FAD as cofactor.

Its subcellular location is the cell inner membrane. It carries out the reaction a quinone + succinate = fumarate + a quinol. Functionally, the fumarate reductase enzyme complex is required for fumarate respiration. The chain is Fumarate reductase flavoprotein subunit (frdA) from Helicobacter pylori (strain J99 / ATCC 700824) (Campylobacter pylori J99).